A 130-amino-acid polypeptide reads, in one-letter code: Small ribosomal subunit protein uS9 (130 aa).

Residues 105 to 130 form a disordered region; that stretch reads TRDPRMKERKKYGLKGARRAPQFSKR. Basic residues predominate over residues 111–130; sequence KERKKYGLKGARRAPQFSKR.

It belongs to the universal ribosomal protein uS9 family.

This Bacillus pumilus (strain SAFR-032) protein is Small ribosomal subunit protein uS9.